The following is a 362-amino-acid chain: MAQIFNFSSGPAMLPAEVLKQAQQELRDWNGLGTSVMEVSHRGKEFIQVAEEAEKDFRDLLNVPSNYKVLFCHGGGRGQFAAVPLNILGDKTTADYVDAGYWAASAIKEAKKYCTPNVFDAKVTVDGLRAVKPMSEWQLSDNAAYMHYCPNETIDGIAIDETPDFGKDVVVAADFSSTILSRPIDVSRYGVIYAGAQKNIGPAGLTIVIVREDLLGKANIACPSILDYSILNDNDSMFNTPPTFAWYLSGLVFKWLKANGGVAAMDKINQQKAELLYGVIDNSDFYRNDVAKANRSRMNVPFQLADSALDKLFLEESFAAGLHALKGHRVVGGMRASIYNAMPLEGVKALTDFMVEFERRHG.

Residues serine 9 and arginine 42 each coordinate L-glutamate. Pyridoxal 5'-phosphate is bound by residues 76-77 (GR), tryptophan 102, threonine 153, aspartate 174, and glutamine 197. Residue lysine 198 is modified to N6-(pyridoxal phosphate)lysine. Residue 239–240 (NT) coordinates pyridoxal 5'-phosphate.

Belongs to the class-V pyridoxal-phosphate-dependent aminotransferase family. SerC subfamily. In terms of assembly, homodimer. Pyridoxal 5'-phosphate serves as cofactor.

Its subcellular location is the cytoplasm. It carries out the reaction O-phospho-L-serine + 2-oxoglutarate = 3-phosphooxypyruvate + L-glutamate. The catalysed reaction is 4-(phosphooxy)-L-threonine + 2-oxoglutarate = (R)-3-hydroxy-2-oxo-4-phosphooxybutanoate + L-glutamate. Its pathway is amino-acid biosynthesis; L-serine biosynthesis; L-serine from 3-phospho-D-glycerate: step 2/3. It participates in cofactor biosynthesis; pyridoxine 5'-phosphate biosynthesis; pyridoxine 5'-phosphate from D-erythrose 4-phosphate: step 3/5. Catalyzes the reversible conversion of 3-phosphohydroxypyruvate to phosphoserine and of 3-hydroxy-2-oxo-4-phosphonooxybutanoate to phosphohydroxythreonine. The protein is Phosphoserine aminotransferase of Escherichia coli O6:K15:H31 (strain 536 / UPEC).